Here is a 30-residue protein sequence, read N- to C-terminus: Hainantoxin F6-34.84 (30 aa).

Disulfide bonds link Cys-2/Cys-15 and Cys-9/Cys-24.

The protein belongs to the AVIT (prokineticin) family. In terms of tissue distribution, expressed by the venom gland.

Its subcellular location is the secreted. This is Hainantoxin F6-34.84 from Cyriopagopus hainanus (Chinese bird spider).